Consider the following 476-residue polypeptide: Aspartyl/glutamyl-tRNA(Asn/Gln) amidotransferase subunit B (476 aa).

It belongs to the GatB/GatE family. GatB subfamily. In terms of assembly, heterotrimer of A, B and C subunits.

The catalysed reaction is L-glutamyl-tRNA(Gln) + L-glutamine + ATP + H2O = L-glutaminyl-tRNA(Gln) + L-glutamate + ADP + phosphate + H(+). It catalyses the reaction L-aspartyl-tRNA(Asn) + L-glutamine + ATP + H2O = L-asparaginyl-tRNA(Asn) + L-glutamate + ADP + phosphate + 2 H(+). Allows the formation of correctly charged Asn-tRNA(Asn) or Gln-tRNA(Gln) through the transamidation of misacylated Asp-tRNA(Asn) or Glu-tRNA(Gln) in organisms which lack either or both of asparaginyl-tRNA or glutaminyl-tRNA synthetases. The reaction takes place in the presence of glutamine and ATP through an activated phospho-Asp-tRNA(Asn) or phospho-Glu-tRNA(Gln). The sequence is that of Aspartyl/glutamyl-tRNA(Asn/Gln) amidotransferase subunit B from Variovorax paradoxus (strain S110).